The primary structure comprises 136 residues: Crossover junction endodeoxyribonuclease Hjc (136 aa).

Residue Glu9 coordinates Mg(2+). Ser29 is an active-site residue. Residues Asp38 and Glu51 each contribute to the Mg(2+) site.

Belongs to the Holliday junction resolvase Hjc family. As to quaternary structure, homodimer. It depends on Mg(2+) as a cofactor.

The enzyme catalyses Endonucleolytic cleavage at a junction such as a reciprocal single-stranded crossover between two homologous DNA duplexes (Holliday junction).. Its function is as follows. A structure-specific endonuclease that resolves Holliday junction (HJ) intermediates during genetic recombination. Cleaves 4-way DNA junctions introducing paired nicks in opposing strands, leaving a 5'-terminal phosphate and a 3'-terminal hydroxyl group that are subsequently ligated to produce recombinant products. The polypeptide is Crossover junction endodeoxyribonuclease Hjc (Archaeoglobus fulgidus (strain ATCC 49558 / DSM 4304 / JCM 9628 / NBRC 100126 / VC-16)).